The primary structure comprises 195 residues: dCTP deaminase, dUMP-forming (195 aa).

Residues 105-110 (RSSLGR), Asp123, 131-133 (TLE), Gln152, Tyr166, Lys173, and Gln177 each bind dCTP. Glu133 serves as the catalytic Proton donor/acceptor. The interval 161 to 195 (PADRPYGDERGSKYQDQDGPQASRIRGDREFGGTQ) is disordered. Over residues 165–176 (PYGDERGSKYQD) the composition is skewed to basic and acidic residues. The span at 185 to 195 (IRGDREFGGTQ) shows a compositional bias: basic and acidic residues.

Belongs to the dCTP deaminase family. As to quaternary structure, homotrimer.

The enzyme catalyses dCTP + 2 H2O = dUMP + NH4(+) + diphosphate. The protein operates within pyrimidine metabolism; dUMP biosynthesis; dUMP from dCTP: step 1/1. In terms of biological role, bifunctional enzyme that catalyzes both the deamination of dCTP to dUTP and the hydrolysis of dUTP to dUMP without releasing the toxic dUTP intermediate. The protein is dCTP deaminase, dUMP-forming of Halobacterium salinarum (strain ATCC 700922 / JCM 11081 / NRC-1) (Halobacterium halobium).